We begin with the raw amino-acid sequence, 397 residues long: CCA-adding enzyme (397 aa).

ATP is bound by residues Gly26 and Arg29. Gly26 and Arg29 together coordinate CTP. Mg(2+)-binding residues include Asp39 and Asp41. Residues Arg110, Asp153, Arg156, Arg159, and Arg162 each contribute to the ATP site. Arg110, Asp153, Arg156, Arg159, and Arg162 together coordinate CTP.

This sequence belongs to the tRNA nucleotidyltransferase/poly(A) polymerase family. Bacterial CCA-adding enzyme type 3 subfamily. Homodimer. The cofactor is Mg(2+).

The enzyme catalyses a tRNA precursor + 2 CTP + ATP = a tRNA with a 3' CCA end + 3 diphosphate. It catalyses the reaction a tRNA with a 3' CCA end + 2 CTP + ATP = a tRNA with a 3' CCACCA end + 3 diphosphate. Catalyzes the addition and repair of the essential 3'-terminal CCA sequence in tRNAs without using a nucleic acid template. Adds these three nucleotides in the order of C, C, and A to the tRNA nucleotide-73, using CTP and ATP as substrates and producing inorganic pyrophosphate. tRNA 3'-terminal CCA addition is required both for tRNA processing and repair. Also involved in tRNA surveillance by mediating tandem CCA addition to generate a CCACCA at the 3' terminus of unstable tRNAs. While stable tRNAs receive only 3'-terminal CCA, unstable tRNAs are marked with CCACCA and rapidly degraded. In Bacillus cereus (strain 03BB102), this protein is CCA-adding enzyme.